Consider the following 289-residue polypeptide: tRNA pseudouridine synthase B (289 aa).

The active-site Nucleophile is Asp55. The interval 243–289 (PGGVLAQHEREGSRALDSAAGNAEHDREEARIADNNREDRSRQHADR) is disordered. Positions 265–289 (AEHDREEARIADNNREDRSRQHADR) are enriched in basic and acidic residues.

This sequence belongs to the pseudouridine synthase TruB family. Type 1 subfamily.

It catalyses the reaction uridine(55) in tRNA = pseudouridine(55) in tRNA. Its function is as follows. Responsible for synthesis of pseudouridine from uracil-55 in the psi GC loop of transfer RNAs. The chain is tRNA pseudouridine synthase B from Chlorobium luteolum (strain DSM 273 / BCRC 81028 / 2530) (Pelodictyon luteolum).